We begin with the raw amino-acid sequence, 465 residues long: MMKSRFCPSPTGLMHLGNARTALFNYLFAKSKDGIFLLRIEDTDVERSKETFDLGLQEDLRWLNLEWQEGPGADEGNGPYHQSKRQAIYDDYYQRLEEADQAYPCFCSEEQLRLSRKIQRSAGKPPRYAGTCRSLSAAEIEKKKAEGLQPALRFRVPDDEVVVFADLVRGEQRFQTNDIGDFIIRRANGTSPFMFCNAIDDALMGVSHVLRGEDHLTNTPRQLLILQALELPVPTYAHIALIVGPDGSPLSKRHGSRGIKELRDNGYLPLALTNYLARLGHYYASDELLSLAELAKGFNVESLSKSPAKFNAQQLDYWQKQTVNQLPNDDFWEWAGSELQSQIPTDKADLFLTTVKPNVSFPRDVAYWVNVCFGKTFNLETAQSELLRATGNRYFEEAFEAFKKFGKDLNSVVSHLKEKLNLKGKPLYQPLRIALTGAEHGPELAKLILIMDYETIQNRLQEACQ.

The 'HIGH' region motif lies at 8-18 (PSPTGLMHLGN). The short motif at 249 to 253 (PLSKR) is the 'KMSKS' region element. Residue lysine 252 participates in ATP binding.

This sequence belongs to the class-I aminoacyl-tRNA synthetase family. Glutamate--tRNA ligase type 1 subfamily. As to quaternary structure, monomer.

It localises to the cytoplasm. The catalysed reaction is tRNA(Glu) + L-glutamate + ATP = L-glutamyl-tRNA(Glu) + AMP + diphosphate. Its function is as follows. Catalyzes the attachment of glutamate to tRNA(Glu) in a two-step reaction: glutamate is first activated by ATP to form Glu-AMP and then transferred to the acceptor end of tRNA(Glu). This is Glutamate--tRNA ligase 1 from Coxiella burnetii (strain CbuG_Q212) (Coxiella burnetii (strain Q212)).